The chain runs to 315 residues: Protein SHORT INTERNODES 1 (315 aa).

Residues 1-10 (MAGFPLGGGS) show a composition bias toward gly residues. Disordered stretches follow at residues 1-24 (MAGF…PPVH) and 64-92 (PPAP…GGGG). A compositionally biased stretch (low complexity) spans 70–82 (AGASSSSSSRGMR). A compositionally biased stretch (gly residues) spans 83–92 (SSGGGGGGGG). Cysteine 97, cysteine 100, cysteine 108, cysteine 113, cysteine 117, and cysteine 124 together coordinate Zn(2+). The segment at residues 97–124 (CQDCGNQAKKDCTHMRCRTCCKSRGFAC) is a DNA-binding region (zn(2)-C6 fungal-type; degenerate). 2 stretches are compositionally biased toward low complexity: residues 143-156 (QQLA…AATA) and 172-182 (RPSATTPTTSS). Residues 143 to 186 (QQLAALAASAAATAGGAGPSRDPTKRPRARPSATTPTTSSGDQQ) form a disordered region. A Required for homo- and heterodimerization motif is present at residues 227–230 (IGGH).

The protein belongs to the SHI protein family. In terms of assembly, forms homodimers (via C-terminus). Interacts with SPL14/IPA1 (via C-terminus). Predominantly expressed in axillary buds and young panicles.

It is found in the nucleus. Functionally, regulates tillering and panicle branching by modulating SPL14/IPA1 transcriptional activity on the downstream TB1 and DEP1 target genes. Binds directly to the 5'-T/GCTCTAC-3' DNA motif found in the promoter regions of both TB1 and DEP1. Represses the DNA binding activity of SPL14/IPA1 toward the promoters of both TB1 and DEP1. Exhibits weak transcriptional activation activity in yeast cells. This chain is Protein SHORT INTERNODES 1, found in Oryza sativa subsp. japonica (Rice).